Here is a 296-residue protein sequence, read N- to C-terminus: Tubulin polyglutamylase complex subunit 2 (296 aa).

The disordered stretch occupies residues lysine 257 to lysine 296.

Part of the neuronal tubulin polyglutamylase complex which contains TPGS1, TPGS2, TTLL1, LRRC49 and NICN1. Interacts with CSTPP1 and LRRC49.

It localises to the cytoplasm. It is found in the cytoskeleton. The protein localises to the microtubule organizing center. Its subcellular location is the centrosome. The protein resides in the centriolar satellite. Its function is as follows. Subunit of the tubulin polyglutamylase complex (TPGC). The complex mediates cilia and flagella polyglutamylation which is essential for their biogenesis and motility. The chain is Tubulin polyglutamylase complex subunit 2 (Tpgs2) from Rattus norvegicus (Rat).